Here is a 454-residue protein sequence, read N- to C-terminus: L-serine dehydratase TdcG (454 aa).

This sequence belongs to the iron-sulfur dependent L-serine dehydratase family. Requires [4Fe-4S] cluster as cofactor.

The catalysed reaction is L-serine = pyruvate + NH4(+). It participates in amino-acid degradation; L-threonine degradation via propanoate pathway. This Escherichia coli (strain K12) protein is L-serine dehydratase TdcG (tdcG).